Reading from the N-terminus, the 417-residue chain is UDP-N-acetylglucosamine 1-carboxyvinyltransferase (417 aa).

A phosphoenolpyruvate-binding site is contributed by 22 to 23 (KN). Arginine 93 lines the UDP-N-acetyl-alpha-D-glucosamine pocket. Cysteine 117 (proton donor) is an active-site residue. Position 117 is a 2-(S-cysteinyl)pyruvic acid O-phosphothioketal (cysteine 117). UDP-N-acetyl-alpha-D-glucosamine contacts are provided by residues 122 to 126 (RPVDL), aspartate 305, and isoleucine 327.

The protein belongs to the EPSP synthase family. MurA subfamily.

The protein localises to the cytoplasm. It catalyses the reaction phosphoenolpyruvate + UDP-N-acetyl-alpha-D-glucosamine = UDP-N-acetyl-3-O-(1-carboxyvinyl)-alpha-D-glucosamine + phosphate. Its pathway is cell wall biogenesis; peptidoglycan biosynthesis. Cell wall formation. Adds enolpyruvyl to UDP-N-acetylglucosamine. This Thiobacillus denitrificans (strain ATCC 25259 / T1) protein is UDP-N-acetylglucosamine 1-carboxyvinyltransferase.